An 821-amino-acid polypeptide reads, in one-letter code: Palmitoyltransferase AKR1 (821 aa).

Residues 1–118 (MVDKDANNEL…KDTASRKSMD (118 aa)) are disordered. Topologically, residues 1-400 (MVDKDANNEL…TIYLNPKIGK (400 aa)) are cytoplasmic. Over residues 93–117 (IQDESVNDKTSEPDENKDTASRKSM) the composition is skewed to basic and acidic residues. ANK repeat units lie at residues 142 to 172 (PSLHNLMSACQQGDLTKVSELISNGEVKAND), 176 to 205 (DGITALHWAAINNRLTIVKYLIENDHSKAD), 213 to 243 (LKASPLHWACRNGLVYIVDYFIVHTDADPTL), 247 to 277 (QSYNALHLAVHSSNITLIIYLLLSCCGSTST), 289 to 318 (CDRTSLHWAAYQGDLLTINALLKFGADVSK), and 322 to 351 (NLFIPLHWAFMKGYKTVLKVLAGAGSNIFA). Residues 401–421 (LVTFFTPYIILPIMFQVCSFY) form a helical membrane-spanning segment. Position 422 (N422) is a topological domain, lumenal. A helical membrane pass occupies residues 423-443 (GFVIPKLFFSVVLFAGSIYIL). The Cytoplasmic segment spans residues 444 to 463 (QKLVIPTYLAEEKAIPKSPL). A helical membrane pass occupies residues 464–484 (LAGIFSGTAFWCIVTWAFNII). Residues 485–494 (PTLLFKKFIS) are Lumenal-facing. A helical transmembrane segment spans residues 495–515 (NLVLSAFIYLFVWSFFKAMFI). At 516 to 589 (NPGYVPVPSD…YNDIGVRNHK (74 aa)) the chain is on the cytoplasmic side. Residues 546-596 (NFCVNTFVRKPLRSKYSRFNKKLIARFDHYCPWVYNDIGVRNHKLFVVFVY) form the DHHC domain. The active-site S-palmitoyl cysteine intermediate is C576. Residues 590–610 (LFVVFVYSLNLAVLLFTHLSI) form a helical membrane-spanning segment. Over 611 to 650 (KLFKNTEKMSGYDSDDESQKCWLLSDELCVGYKSHHFQFN) the chain is Lumenal. The chain crosses the membrane as a helical span at residues 651 to 671 (LMLWCLIQYIWIAFLCLVQTF). Over 672-821 (QILKGLTTWE…YPPKLADVDA (150 aa)) the chain is Cytoplasmic.

Belongs to the DHHC palmitoyltransferase family. AKR/ZDHHC17 subfamily.

The protein resides in the early endosome membrane. The protein localises to the golgi apparatus membrane. The catalysed reaction is L-cysteinyl-[protein] + hexadecanoyl-CoA = S-hexadecanoyl-L-cysteinyl-[protein] + CoA. Its function is as follows. Palmitoyltransferase specific for casein kinase 1. The polypeptide is Palmitoyltransferase AKR1 (AKR1) (Debaryomyces hansenii (strain ATCC 36239 / CBS 767 / BCRC 21394 / JCM 1990 / NBRC 0083 / IGC 2968) (Yeast)).